Reading from the N-terminus, the 261-residue chain is Indole-3-glycerol phosphate synthase (261 aa).

It belongs to the TrpC family.

It catalyses the reaction 1-(2-carboxyphenylamino)-1-deoxy-D-ribulose 5-phosphate + H(+) = (1S,2R)-1-C-(indol-3-yl)glycerol 3-phosphate + CO2 + H2O. It functions in the pathway amino-acid biosynthesis; L-tryptophan biosynthesis; L-tryptophan from chorismate: step 4/5. The protein is Indole-3-glycerol phosphate synthase of Paraburkholderia phytofirmans (strain DSM 17436 / LMG 22146 / PsJN) (Burkholderia phytofirmans).